The primary structure comprises 97 residues: UPF0416 protein RC0826 (97 aa).

The signal sequence occupies residues 1 to 33 (MRIFVKAAISTAAWRFYAHPTVAMGICVGTALA).

This sequence belongs to the UPF0416 family.

The chain is UPF0416 protein RC0826 from Rickettsia conorii (strain ATCC VR-613 / Malish 7).